The primary structure comprises 234 residues: MLTLLAILVVSYIVGSIPTSLIAGKMLKSIDIRDFGSGNAGGTNAFRVLGWKTGLTVTLIDIIKGVVAAVSVVAFFRHHPIDVFPDINEVALRLLAGMSAVIGHVFTVFAGFRGGKGVSTAAGMLIGIAPVSMLMVIGVFLLTVYISRHVSVASILAAIAFPLIIAIRKYLFELGAGLDYYIKLFNAKFFFHDSLDYHLIIFGLIVAIAIIYTHRANIKRLLAGTENRISFGKH.

The next 6 helical transmembrane spans lie at 4 to 24 (LLAILVVSYIVGSIPTSLIAG), 56 to 76 (TVTLIDIIKGVVAAVSVVAFF), 90 to 110 (VALRLLAGMSAVIGHVFTVFA), 122 to 142 (AGMLIGIAPVSMLMVIGVFLL), 152 to 172 (VASILAAIAFPLIIAIRKYLF), and 191 to 211 (FHDSLDYHLIIFGLIVAIAII).

The protein belongs to the PlsY family. Probably interacts with PlsX.

It localises to the cell inner membrane. It carries out the reaction an acyl phosphate + sn-glycerol 3-phosphate = a 1-acyl-sn-glycero-3-phosphate + phosphate. The protein operates within lipid metabolism; phospholipid metabolism. Functionally, catalyzes the transfer of an acyl group from acyl-phosphate (acyl-PO(4)) to glycerol-3-phosphate (G3P) to form lysophosphatidic acid (LPA). This enzyme utilizes acyl-phosphate as fatty acyl donor, but not acyl-CoA or acyl-ACP. This chain is Glycerol-3-phosphate acyltransferase, found in Chlorobium chlorochromatii (strain CaD3).